A 539-amino-acid polypeptide reads, in one-letter code: MASVEPIKTFEIRQKGPVETKAERKSIRDLNEEELDKLIEAWRWIQDPARTGEDSFFYLAGLHGEPFRGAGYNNSHWWGGYCHHGNILFPTWHRAYLMAVEKALRKACPDVSLPYWDESDDETAKKGIPLIFTQKEYKGKPNPLYSYTFSERIVDRLAKFPDADYSKPQGYKTCRYPYSGLCGQDDIAIAQQHNNFLDANFNQEQITGLLNSNVTSWLNLGQFTDIEGKQVKADTRWKIRQCLLTEEYTVFSNTTSAQRWNDEQFHPLESGGKETEAKATSLAVPLESPHNDMHLAIGGVQIPGFNVDQYAGANGDMGENDTASFDPIFYFHHCFIDYLFWTWQTMHKKTDASQITILPEYPGTNSVDSQGPTPGISGNTWLTLDTPLDPFRENGDKVTSNKLLTLKDLPYTYKAPTSGTGSVFNDVPRLNYPLSPPILRVSGINRASIAGSFALAISQTDHTGKAQVKGIESVLSRWHVQGCANCQTHLSTTAFVPLFELNEDDAKRKHANNELAVHLHTRGNPGGQRVRNVTVGTMR.

Positions 63, 84, 93, 290, 294, and 333 each coordinate Cu cation. Positions 82–84 form a cross-link, 2'-(S-cysteinyl)-histidine (Cys-His); it reads CHH.

It belongs to the tyrosinase family. As to quaternary structure, homotetramer. Cu(2+) serves as cofactor. Post-translationally, the N-terminus is blocked.

It carries out the reaction 2 L-dopa + O2 = 2 L-dopaquinone + 2 H2O. The enzyme catalyses L-tyrosine + O2 = L-dopaquinone + H2O. With respect to regulation, activated by acidifying treatment at pH 3.0. Functionally, this is a copper-containing oxidase that functions in the formation of pigments such as melanins and other polyphenolic compounds. This chain is Tyrosinase (melO), found in Aspergillus oryzae (strain ATCC 42149 / RIB 40) (Yellow koji mold).